A 365-amino-acid chain; its full sequence is Alanine racemase (365 aa).

Residue K32 is the Proton acceptor; specific for D-alanine of the active site. The residue at position 32 (K32) is an N6-(pyridoxal phosphate)lysine. Position 128 (R128) interacts with substrate. Residue Y257 is the Proton acceptor; specific for L-alanine of the active site. Position 305 (M305) interacts with substrate.

This sequence belongs to the alanine racemase family. Pyridoxal 5'-phosphate is required as a cofactor.

The enzyme catalyses L-alanine = D-alanine. Its pathway is amino-acid biosynthesis; D-alanine biosynthesis; D-alanine from L-alanine: step 1/1. Catalyzes the interconversion of L-alanine and D-alanine. May also act on other amino acids. This chain is Alanine racemase (alr), found in Francisella philomiragia subsp. philomiragia (strain ATCC 25017 / CCUG 19701 / FSC 153 / O#319-036).